The primary structure comprises 211 residues: Small ribosomal subunit protein uS3 (211 aa).

Residues 38–106 (LRNFLKKRLY…EVYLNIQEVR (69 aa)) form the KH type-2 domain.

The protein belongs to the universal ribosomal protein uS3 family. Part of the 30S ribosomal subunit. Forms a tight complex with proteins S10 and S14.

Functionally, binds the lower part of the 30S subunit head. Binds mRNA in the 70S ribosome, positioning it for translation. The chain is Small ribosomal subunit protein uS3 from Geobacter sp. (strain M21).